The following is a 276-amino-acid chain: Src-like-adapter (276 aa).

Residue Gly-2 is the site of N-myristoyl glycine attachment. Residues 22 to 82 form the SH3 domain; the sequence is LDSDFLAVLS…PGICVARVYH (61 aa). An SH2 domain is found at 84 to 175; the sequence is WLFEGLGRDK…GLCCVLTTPC (92 aa). Residues 212–276 are SLA C-terminal; sequence EGTENPLGVD…FFSSPPYFED (65 aa). Ser-253 is modified (phosphoserine). Tyr-273 is modified (phosphotyrosine).

Interacts with EPHA2, VAV1, LCP2 and PDGFRB. Homodimer. Homodimerization and interaction with phosphorylated CBL occurs via its C-terminal domain. Interacts with phosphorylated proteins ZAP70, CD3Z, SYK and LAT via its SH2 domain. In terms of tissue distribution, expressed in lung and fetal brain. Weakly expressed in heart, adult brain, placenta, liver, skeletal muscle, kidney and pancreas.

It is found in the cytoplasm. It localises to the endosome. In terms of biological role, adapter protein, which negatively regulates T-cell receptor (TCR) signaling. Inhibits T-cell antigen-receptor induced activation of nuclear factor of activated T-cells. Involved in the negative regulation of positive selection and mitosis of T-cells. May act by linking signaling proteins such as ZAP70 with CBL, leading to a CBL dependent degradation of signaling proteins. The sequence is that of Src-like-adapter (SLA) from Homo sapiens (Human).